The chain runs to 178 residues: Inner membrane-spanning protein YciB (178 aa).

Helical transmembrane passes span 22–42 (IFYA…MTYF), 50–70 (ASLI…AFHS), 72–92 (LFIK…LLGS), 121–141 (MAWA…AFWL), and 149–169 (FKVF…VVYI).

It belongs to the YciB family.

Its subcellular location is the cell inner membrane. Its function is as follows. Plays a role in cell envelope biogenesis, maintenance of cell envelope integrity and membrane homeostasis. This is Inner membrane-spanning protein YciB from Photorhabdus laumondii subsp. laumondii (strain DSM 15139 / CIP 105565 / TT01) (Photorhabdus luminescens subsp. laumondii).